The chain runs to 442 residues: Prenyltransferase nscD (442 aa).

It belongs to the tryptophan dimethylallyltransferase family.

The protein operates within secondary metabolite biosynthesis. Its function is as follows. Prenyltransferase; part of the gene cluster that mediates the biosynthesis of neosartoricin B, a prenylated anthracenone that probably exhibits T-cell antiproliferative activity, suggestive of a physiological role as an immunosuppressive agent. The non-reducing polyketide synthase nscA probably synthesizes and cyclizes the decaketide backbone. The hydrolase nscB then mediates the product release through hydrolysis followed by spontaneous decarboxylation. The prenyltransferase nscD catalyzes the addition of the dimethylallyl group to the aromatic C5. The FAD-dependent monooxygenase nscC is then responsible for the stereospecific hydroxylation at C2. Neosartoricin B can be converted into two additional compounds neosartoricins C and D. Neosartoricin C is a spirocyclic compound that is cyclized through the attack of C3 hydroxyl on C14, followed by dehydration. On the other hand, neosartoricin D is a further cyclized compound in which attack of C2 on C14 in neosartoricin C results in the formation of the acetal-containing dioxabicyclo-octanone ring. Both of these compounds are novel and possibly represent related metabolites of the gene cluster. This Trichophyton verrucosum (strain HKI 0517) protein is Prenyltransferase nscD.